Reading from the N-terminus, the 242-residue chain is Purine nucleoside phosphorylase PA4543 (242 aa).

Positions 69, 103, and 120 each coordinate Zn(2+).

It belongs to the purine nucleoside phosphorylase YfiH/LACC1 family. In terms of assembly, homodimer. Requires Cu(2+) as cofactor. The cofactor is Zn(2+).

The catalysed reaction is adenosine + phosphate = alpha-D-ribose 1-phosphate + adenine. It catalyses the reaction S-methyl-5'-thioadenosine + phosphate = 5-(methylsulfanyl)-alpha-D-ribose 1-phosphate + adenine. It carries out the reaction inosine + phosphate = alpha-D-ribose 1-phosphate + hypoxanthine. The enzyme catalyses adenosine + H2O + H(+) = inosine + NH4(+). Its function is as follows. Purine nucleoside enzyme that catalyzes the phosphorolysis of adenosine and inosine nucleosides, yielding D-ribose 1-phosphate and the respective free bases, adenine and hypoxanthine. Also catalyzes the phosphorolysis of S-methyl-5'-thioadenosine into adenine and S-methyl-5-thio-alpha-D-ribose 1-phosphate. Also has adenosine deaminase activity. The sequence is that of Purine nucleoside phosphorylase PA4543 from Pseudomonas aeruginosa (strain ATCC 15692 / DSM 22644 / CIP 104116 / JCM 14847 / LMG 12228 / 1C / PRS 101 / PAO1).